The primary structure comprises 137 residues: Proofreading thioesterase EntH (137 aa).

Catalysis depends on E63, which acts as the Nucleophile or proton acceptor.

This sequence belongs to the thioesterase PaaI family. As to quaternary structure, homotetramer. Dimer of dimers. Interacts specifically with the aryl carrier protein (ArCP) domain of EntB.

It is found in the cytoplasm. The protein operates within siderophore biosynthesis; enterobactin biosynthesis. Functionally, required for optimal enterobactin synthesis. Acts as a proofreading enzyme that prevents EntB misacylation by hydrolyzing the thioester bound existing between EntB and wrongly charged molecules. The sequence is that of Proofreading thioesterase EntH (entH) from Klebsiella pneumoniae subsp. pneumoniae (strain ATCC 700721 / MGH 78578).